A 427-amino-acid polypeptide reads, in one-letter code: 3-phosphoshikimate 1-carboxyvinyltransferase (427 aa).

Lys22, Ser23, and Arg27 together coordinate 3-phosphoshikimate. Lys22 is a binding site for phosphoenolpyruvate. Residues Gly96 and Arg124 each contribute to the phosphoenolpyruvate site. 3-phosphoshikimate contacts are provided by Ser169, Ser170, Gln171, Ser197, Asp313, Asn336, and Lys340. Gln171 contributes to the phosphoenolpyruvate binding site. Residue Asp313 is the Proton acceptor of the active site. Arg344, Arg386, and Lys411 together coordinate phosphoenolpyruvate.

This sequence belongs to the EPSP synthase family. As to quaternary structure, monomer.

It is found in the cytoplasm. The enzyme catalyses 3-phosphoshikimate + phosphoenolpyruvate = 5-O-(1-carboxyvinyl)-3-phosphoshikimate + phosphate. It participates in metabolic intermediate biosynthesis; chorismate biosynthesis; chorismate from D-erythrose 4-phosphate and phosphoenolpyruvate: step 6/7. Catalyzes the transfer of the enolpyruvyl moiety of phosphoenolpyruvate (PEP) to the 5-hydroxyl of shikimate-3-phosphate (S3P) to produce enolpyruvyl shikimate-3-phosphate and inorganic phosphate. The polypeptide is 3-phosphoshikimate 1-carboxyvinyltransferase (Shigella dysenteriae).